A 128-amino-acid polypeptide reads, in one-letter code: Cystatin-1 (128 aa).

The N-terminal stretch at 1–17 (MIRSAVVLTVLVGVCLA) is a signal peptide. In terms of domain architecture, Cystatin spans 20–128 (GFVGGWSQVD…TKEVTSFECN (109 aa)). 2 disulfide bridges follow: C84/C96 and C107/C127.

It belongs to the cystatin family. In terms of tissue distribution, mainly expressed in gut.

The protein localises to the secreted. Inhibitor of cysteine proteinases. Strongly inhibits mammalian cathepsin B and H, and moderately inhibits mammalian cathepsin C. Also inhibits endogenous cathepsin B-like but not cathepsin C-like proteinases. May have a protective role against undesired digestion of a stored blood meal by endogenous peptidases. This is Cystatin-1 from Ornithodoros moubata (Soft tick).